The following is a 587-amino-acid chain: 2-succinyl-5-enolpyruvyl-6-hydroxy-3-cyclohexene-1-carboxylate synthase (587 aa).

Belongs to the TPP enzyme family. MenD subfamily. Homodimer. Mg(2+) serves as cofactor. Requires Mn(2+) as cofactor. The cofactor is thiamine diphosphate.

The enzyme catalyses isochorismate + 2-oxoglutarate + H(+) = 5-enolpyruvoyl-6-hydroxy-2-succinyl-cyclohex-3-ene-1-carboxylate + CO2. It functions in the pathway quinol/quinone metabolism; 1,4-dihydroxy-2-naphthoate biosynthesis; 1,4-dihydroxy-2-naphthoate from chorismate: step 2/7. The protein operates within quinol/quinone metabolism; menaquinone biosynthesis. Functionally, catalyzes the thiamine diphosphate-dependent decarboxylation of 2-oxoglutarate and the subsequent addition of the resulting succinic semialdehyde-thiamine pyrophosphate anion to isochorismate to yield 2-succinyl-5-enolpyruvyl-6-hydroxy-3-cyclohexene-1-carboxylate (SEPHCHC). The chain is 2-succinyl-5-enolpyruvyl-6-hydroxy-3-cyclohexene-1-carboxylate synthase from Chloroflexus aurantiacus (strain ATCC 29366 / DSM 635 / J-10-fl).